We begin with the raw amino-acid sequence, 161 residues long: Small ribosomal subunit protein uS9 (161 aa).

Disordered stretches follow at residues 1 to 27 (MAQI…APKA) and 142 to 161 (KERK…FSKR).

This sequence belongs to the universal ribosomal protein uS9 family.

The protein is Small ribosomal subunit protein uS9 of Clavibacter michiganensis subsp. michiganensis (strain NCPPB 382).